The primary structure comprises 487 residues: Chromosomal replication initiator protein DnaA (487 aa).

The domain I, interacts with DnaA modulators stretch occupies residues 1 to 79; it reads MPNSMWHQCL…QAPRVMMKVG (79 aa). The tract at residues 78-138 is disordered; sequence VGSAPKPTDP…PAPKAQAERR (61 aa). The interval 79 to 150 is domain II; sequence GSAPKPTDPV…QVEGDIKHQS (72 aa). Residues 151-367 are domain III, AAA+ region; sequence FLNETFTFDT…GALRLVIANA (217 aa). Gly-195, Gly-197, Lys-198, and Thr-199 together coordinate ATP. Positions 368 to 487 are domain IV, binds dsDNA; that stretch reads HFTGSEITPP…YQNFMRLLTT (120 aa).

Belongs to the DnaA family. In terms of assembly, oligomerizes as a right-handed, spiral filament on DNA at oriC.

Its subcellular location is the cytoplasm. Functionally, plays an essential role in the initiation and regulation of chromosomal replication. ATP-DnaA binds to the origin of replication (oriC) to initiate formation of the DNA replication initiation complex once per cell cycle. Binds the DnaA box (a 9 base pair repeat at the origin) and separates the double-stranded (ds)DNA. Forms a right-handed helical filament on oriC DNA; dsDNA binds to the exterior of the filament while single-stranded (ss)DNA is stabiized in the filament's interior. The ATP-DnaA-oriC complex binds and stabilizes one strand of the AT-rich DNA unwinding element (DUE), permitting loading of DNA polymerase. After initiation quickly degrades to an ADP-DnaA complex that is not apt for DNA replication. Binds acidic phospholipids. In Marinobacter nauticus (strain ATCC 700491 / DSM 11845 / VT8) (Marinobacter aquaeolei), this protein is Chromosomal replication initiator protein DnaA.